The chain runs to 276 residues: Imidazole glycerol phosphate synthase subunit HisF (276 aa).

Residues D11 and D130 contribute to the active site.

Belongs to the HisA/HisF family. Heterodimer of HisH and HisF.

The protein localises to the cytoplasm. The catalysed reaction is 5-[(5-phospho-1-deoxy-D-ribulos-1-ylimino)methylamino]-1-(5-phospho-beta-D-ribosyl)imidazole-4-carboxamide + L-glutamine = D-erythro-1-(imidazol-4-yl)glycerol 3-phosphate + 5-amino-1-(5-phospho-beta-D-ribosyl)imidazole-4-carboxamide + L-glutamate + H(+). Its pathway is amino-acid biosynthesis; L-histidine biosynthesis; L-histidine from 5-phospho-alpha-D-ribose 1-diphosphate: step 5/9. Functionally, IGPS catalyzes the conversion of PRFAR and glutamine to IGP, AICAR and glutamate. The HisF subunit catalyzes the cyclization activity that produces IGP and AICAR from PRFAR using the ammonia provided by the HisH subunit. This Beijerinckia indica subsp. indica (strain ATCC 9039 / DSM 1715 / NCIMB 8712) protein is Imidazole glycerol phosphate synthase subunit HisF.